A 374-amino-acid polypeptide reads, in one-letter code: MALSKDLMLKCSEDMMSAYKSACEEHPKLKSFDASLQQRTNKMIDSLTVEDKNGSSSPHDAHMELSKHLVEVTQGVADFITEIEDDVWDNQALKYLVLAYFENTKKTLEIFKTIENCVENAEMGQLLIREALAEFEKESAEKDVGGKKKKYEKTLEDLKSFKEMGDPFDGKVLTTQFERIKKQQESLLEEVSETRKKIQDEISNLEKKTLITNVVFGAAFAIVAVASIALIATGVGAAAGFGALAAPLLAAGWAGVYTTLDKKKDALNKQLEGLKKVEEIEESVEKGIKTNEEATETVSILVDGLEDRIKNMLKLVDNAIDHEDNEAATRIVLTQISKKVEKLTKKITEVGESVEDHSKLIAKARLQVLQKINR.

The stretch at 171–210 (KVLTTQFERIKKQQESLLEEVSETRKKIQDEISNLEKKTL) forms a coiled coil. 2 helical membrane passes run 214-234 (VVFG…IATG) and 235-255 (VGAA…GWAG). Residues 256 to 321 (VYTTLDKKKD…MLKLVDNAID (66 aa)) adopt a coiled-coil conformation.

Belongs to the UPF0496 family.

Its subcellular location is the membrane. The polypeptide is UPF0496 protein At3g28270 (Arabidopsis thaliana (Mouse-ear cress)).